The primary structure comprises 351 residues: Peptide chain release factor 1 (351 aa).

Position 229 is an N5-methylglutamine (Gln-229).

This sequence belongs to the prokaryotic/mitochondrial release factor family. In terms of processing, methylated by PrmC. Methylation increases the termination efficiency of RF1.

It localises to the cytoplasm. In terms of biological role, peptide chain release factor 1 directs the termination of translation in response to the peptide chain termination codons UAG and UAA. The chain is Peptide chain release factor 1 from Cereibacter sphaeroides (strain ATCC 17023 / DSM 158 / JCM 6121 / CCUG 31486 / LMG 2827 / NBRC 12203 / NCIMB 8253 / ATH 2.4.1.) (Rhodobacter sphaeroides).